Consider the following 670-residue polypeptide: MDLHQSATVRLLQEWCSHESPSGCRRHYNTRKKLKLIRVIGLVMGLVAVSTVPFSISAFTETYSQNNRGEASDVTGPRAAPGHRQRTLLDLNDKIRDYTPQPPASQEDRSENGTDHAQGDYPKDVFSLEERRKGAIILHVIGMIYMFIALAIVCDEFFVPSLTVITEKLGISDDVAGATFMAAGGSAPELFTSLIGVFIAHSNVGIGTIVGSAVFNILFVIGMCALFSREILNLTWWPLFRDVSFYIVDLIMLIIFFLDNVIMWWESLLLLTAYFAYVVFMKFNVQVERWVKQMINRNKVVKVTVSEAQAKASTAGDKEEPTLPNKPRLQRGGSSASLHNSLMRNSIFQLMIHTLDPLAEELGSYGKLKYYDTMTEEGRFREKASILHKIAKKKCQVDENERQNGAANHVDYAAEKIELPNSTSTEVEMTPSSEASEPVQNGNLSHSIEAADAPQATETAEEDDDQPLSLSWPSNTRKQITFLIVLPIVFPLWITLPDVRKPASKKFFPITFFGSITWIAVFSYLMVWWAHQVGETIGISEEIMGLTILAAGTSIPDLITSVIVARKGLGDMAVSSSVGSNIFDITVGLPLPWLLYTIIHRFKPVTVSSNGLFCAIVLLFIMLIFVILSIALCKWRMNKILGFIMFGLYFAFLVVSVLLEDKVLECPVSI.

Over 1–38 (MDLHQSATVRLLQEWCSHESPSGCRRHYNTRKKLKLIR) the chain is Cytoplasmic. Residues 39–59 (VIGLVMGLVAVSTVPFSISAF) traverse the membrane as a helical segment. Residues 60–133 (TETYSQNNRG…DVFSLEERRK (74 aa)) are Extracellular-facing. Disordered stretches follow at residues 67 to 86 (NRGEASDVTGPRAAPGHRQR) and 91 to 122 (LNDKIRDYTPQPPASQEDRSENGTDHAQGDYP). Basic and acidic residues predominate over residues 106 to 122 (QEDRSENGTDHAQGDYP). Asn-112 carries N-linked (GlcNAc...) asparagine glycosylation. The chain crosses the membrane as a helical span at residues 134–154 (GAIILHVIGMIYMFIALAIVC). At 155–179 (DEFFVPSLTVITEKLGISDDVAGAT) the chain is on the cytoplasmic side. Residues 175–215 (VAGATFMAAGGSAPELFTSLIGVFIAHSNVGIGTIVGSAVF) form an Alpha-1 repeat. The helical transmembrane segment at 180–200 (FMAAGGSAPELFTSLIGVFIA) threads the bilayer. Over 201 to 205 (HSNVG) the chain is Extracellular. Residues 206–226 (IGTIVGSAVFNILFVIGMCAL) form a helical membrane-spanning segment. Residues 227–244 (FSREILNLTWWPLFRDVS) are Cytoplasmic-facing. Residues 245 to 265 (FYIVDLIMLIIFFLDNVIMWW) form a helical membrane-spanning segment. A topological domain (extracellular) is located at residue Glu-266. A helical membrane pass occupies residues 267-287 (SLLLLTAYFAYVVFMKFNVQV). Topologically, residues 288–506 (ERWVKQMINR…PDVRKPASKK (219 aa)) are cytoplasmic. The interval 312–335 (ASTAGDKEEPTLPNKPRLQRGGSS) is disordered. Phosphoserine is present on residues Ser-337 and Ser-341. Disordered stretches follow at residues 394–414 (KCQVDENERQNGAANHVDYAA) and 450–471 (AADAPQATETAEEDDDQPLSLS). The chain crosses the membrane as a helical span at residues 507–527 (FFPITFFGSITWIAVFSYLMV). The Extracellular segment spans residues 528-542 (WWAHQVGETIGISEE). Residues 543–563 (IMGLTILAAGTSIPDLITSVI) form a helical membrane-spanning segment. Residues 550–581 (AAGTSIPDLITSVIVARKGLGDMAVSSSVGSN) form an Alpha-2 repeat. Topologically, residues 564 to 578 (VARKGLGDMAVSSSV) are cytoplasmic. A helical membrane pass occupies residues 579-599 (GSNIFDITVGLPLPWLLYTII). The Extracellular segment spans residues 600–611 (HRFKPVTVSSNG). A helical transmembrane segment spans residues 612–632 (LFCAIVLLFIMLIFVILSIAL). Residues 633-639 (CKWRMNK) lie on the Cytoplasmic side of the membrane. The helical transmembrane segment at 640–660 (ILGFIMFGLYFAFLVVSVLLE) threads the bilayer. Over 661-670 (DKVLECPVSI) the chain is Extracellular.

This sequence belongs to the Ca(2+):cation antiporter (CaCA) (TC 2.A.19) family. SLC24A subfamily. In terms of tissue distribution, expressed abundantly in all regions of the brain and weakly in the eye, large intestine and adrenal tissue.

The protein resides in the cell membrane. It carries out the reaction Ca(2+)(out) + K(+)(out) + 4 Na(+)(in) = Ca(2+)(in) + K(+)(in) + 4 Na(+)(out). Its function is as follows. Calcium, potassium:sodium antiporter that transports 1 Ca(2+) and 1 K(+) in exchange for 4 Na(+). Required for learming and memory by regulating neuronal Ca(2+), which is essential for the development of synaptic plasticity. The sequence is that of Sodium/potassium/calcium exchanger 2 (Slc24a2) from Rattus norvegicus (Rat).